We begin with the raw amino-acid sequence, 368 residues long: Agmatine deiminase (368 aa).

C357 (amidino-cysteine intermediate) is an active-site residue.

It belongs to the agmatine deiminase family. In terms of assembly, homodimer.

The enzyme catalyses agmatine + H2O = N-carbamoylputrescine + NH4(+). It participates in amine and polyamine biosynthesis; putrescine biosynthesis via agmatine pathway; N-carbamoylputrescine from agmatine: step 1/1. In terms of biological role, mediates the hydrolysis of agmatine into N-carbamoylputrescine in the arginine decarboxylase (ADC) pathway of putrescine biosynthesis, a basic polyamine. This Stutzerimonas stutzeri (strain A1501) (Pseudomonas stutzeri) protein is Agmatine deiminase.